Reading from the N-terminus, the 262-residue chain is Octopine permease ATP-binding protein P (262 aa).

The region spanning 9–254 is the ABC transporter domain; the sequence is VKLTGIRKNF…PRTERFRQFL (246 aa). An ATP-binding site is contributed by 41–48; the sequence is GSSGSGKS.

The protein belongs to the ABC transporter superfamily.

It is found in the cell inner membrane. In terms of biological role, component of the octopine active transport system probably consisting of four subunits: Q, M, P and T. The sequence is that of Octopine permease ATP-binding protein P (occP) from Rhizobium meliloti (Ensifer meliloti).